A 503-amino-acid chain; its full sequence is Alpha-1B-glycoprotein (503 aa).

A signal peptide spans 1–21 (MSAWAALLLLWGLSLSPVTEQ). 5 Ig-like V-type domains span residues 27–115 (PRPS…EVTG), 117–204 (EPLP…TVTI), 208–305 (DPPP…LVLS), 307–405 (GTLP…LRVD), and 406–501 (GPLP…LRVA). A disulfide bridge connects residues Cys49 and Cys96. 2 N-linked (GlcNAc...) asparagine glycosylation sites follow: Asn137 and Asn182. 4 disulfides stabilise this stretch: Cys142–Cys185, Cys235–Cys282, Cys333–Cys382, and Cys431–Cys478. Residue Asn379 is glycosylated (N-linked (GlcNAc...) asparagine).

In terms of assembly, interacts with CRISP3. As to expression, plasma.

The protein localises to the secreted. The protein is Alpha-1B-glycoprotein of Bos taurus (Bovine).